We begin with the raw amino-acid sequence, 54 residues long: Large ribosomal subunit protein bL33A (54 aa).

It belongs to the bacterial ribosomal protein bL33 family.

This Mesoplasma florum (strain ATCC 33453 / NBRC 100688 / NCTC 11704 / L1) (Acholeplasma florum) protein is Large ribosomal subunit protein bL33A.